A 201-amino-acid chain; its full sequence is Putative manganese efflux pump MntP (201 aa).

Transmembrane regions (helical) follow at residues 3 to 23, 39 to 59, 65 to 85, 116 to 136, 141 to 161, and 176 to 196; these read LVSI…VSIT, IGLF…SIGI, IAAL…GKMI, LTLL…SFAF, IINT…IGVM, and ILGG…HTNI.

The protein belongs to the MntP (TC 9.B.29) family.

The protein resides in the cell membrane. Functionally, probably functions as a manganese efflux pump. The protein is Putative manganese efflux pump MntP of Clostridium botulinum (strain Loch Maree / Type A3).